Consider the following 253-residue polypeptide: UPF0280 protein MA_1715 (253 aa).

This sequence belongs to the UPF0280 family.

The chain is UPF0280 protein MA_1715 from Methanosarcina acetivorans (strain ATCC 35395 / DSM 2834 / JCM 12185 / C2A).